Reading from the N-terminus, the 412-residue chain is Lysosomal phospholipase A and acyltransferase (412 aa).

An N-terminal signal peptide occupies residues 1–33 (MDRHLCTCRETQLRSGLLLPLFLLMMLADLTLP). A substrate-binding site is contributed by Asp46. A disulfide bond links Cys65 and Cys89. An N-linked (GlcNAc...) asparagine glycan is attached at Asn99. Ser198 acts as the Acyl-ester intermediate in catalysis. Ser198 provides a ligand contact to Zn(2+). Met199 serves as a coordination point for substrate. N-linked (GlcNAc...) asparagine glycans are attached at residues Asn273 and Asn289. Residue Cys355 coordinates Zn(2+). Catalysis depends on charge relay system residues Asp360 and His392. His392 contacts Zn(2+). The N-linked (GlcNAc...) asparagine glycan is linked to Asn398.

The protein belongs to the AB hydrolase superfamily. Lipase family. N-glycosylated. N-glycosylation is important for maturation of the enzyme and normal subcellular location. In terms of tissue distribution, detected in blood plasma. Detected in alveolar macrophages (at protein level). Detected in heart, liver, spleen, kidney, thymus, brain and lung.

It is found in the secreted. The protein localises to the lysosome. The protein resides in the membrane. The enzyme catalyses a 1,2-diacyl-sn-glycero-3-phosphocholine + H2O = a 2-acyl-sn-glycero-3-phosphocholine + a fatty acid + H(+). It catalyses the reaction 1-hexadecanoyl-2-(9Z-octadecenoyl)-sn-glycero-3-phosphocholine + H2O = 2-(9Z-octadecenoyl)-sn-glycero-3-phosphocholine + hexadecanoate + H(+). It carries out the reaction 1,2-di-(9Z-octadecenoyl)-sn-glycero-3-phosphocholine + H2O = 2-(9Z-octadecenoyl)-sn-glycero-3-phosphocholine + (9Z)-octadecenoate + H(+). The catalysed reaction is 1-hexadecanoyl-2-glutaroyl-sn-glycero-3-phosphocholine + H2O = 2-glutaroyl-sn-glycero-3-phosphocholine + hexadecanoate + H(+). The enzyme catalyses 1-hexadecanoyl-2-nonadioyl-sn-glycero-3-phosphocholine + H2O = 2-nonadioyl-sn-glycero-3-phosphocholine + hexadecanoate + H(+). It catalyses the reaction 1-hexadecanoyl-2-(5-oxopentanoyl)-sn-glycero-3-phosphocholine + H2O = 2-(5-oxopentanoyl)-sn-glycero-3-phosphocholine + hexadecanoate + H(+). It carries out the reaction 1-hexadecanoyl-2-(9-oxononanoyl)-sn-glycero-3-phosphocholine + H2O = 2-(9-oxononanoyl)-sn-glycero-3-phosphocholine + hexadecanoate + H(+). The catalysed reaction is 1,2-dihexadecanoyl-sn-glycero-3-phosphocholine + H2O = 2-hexadecanoyl-sn-glycero-3-phosphocholine + hexadecanoate + H(+). The enzyme catalyses a 1,2-diacyl-sn-glycero-3-phosphocholine + H2O = a 1-acyl-sn-glycero-3-phosphocholine + a fatty acid + H(+). It catalyses the reaction 1-hexadecanoyl-2-(9Z-octadecenoyl)-sn-glycero-3-phosphocholine + H2O = 1-hexadecanoyl-sn-glycero-3-phosphocholine + (9Z)-octadecenoate + H(+). It carries out the reaction 1,2-di-(9Z-octadecenoyl)-sn-glycero-3-phosphocholine + H2O = 1-(9Z-octadecenoyl)-sn-glycero-3-phosphocholine + (9Z)-octadecenoate + H(+). The catalysed reaction is 1,2-dihexadecanoyl-sn-glycero-3-phosphocholine + H2O = 1-hexadecanoyl-sn-glycero-3-phosphocholine + hexadecanoate + H(+). The enzyme catalyses a 1-acyl-sn-glycero-3-phosphocholine + H2O = sn-glycerol 3-phosphocholine + a fatty acid + H(+). It catalyses the reaction 1-hexadecanoyl-sn-glycero-3-phosphocholine + H2O = sn-glycerol 3-phosphocholine + hexadecanoate + H(+). It carries out the reaction N-(acetyl)-sphing-4-enine + a 1,2-diacyl-sn-glycero-3-phosphoethanolamine = 1-O-acyl-N-(acetyl)-sphing-4-enine + a 2-acyl-sn-glycero-3-phosphoethanolamine. The catalysed reaction is 1-hexadecanoyl-2-(9Z-octadecenoyl)-sn-glycero-3-phosphoethanolamine + N-(acetyl)-sphing-4-enine = 2-(9Z-octadecenoyl)-sn-glycero-3-phosphoethanolamine + 1-hexadecanoyl-N-(acetyl)-sphing-4-enine. The enzyme catalyses 1-hexadecanoyl-2-(9Z,12Z-octadecadienoyl)-sn-glycero-3-phosphoethanolamine + N-(acetyl)-sphing-4-enine = 2-(9Z,12Z)-octadecadienoyl-sn-glycero-3-phosphoethanolamine + 1-hexadecanoyl-N-(acetyl)-sphing-4-enine. It catalyses the reaction 1-hexadecanoyl-2-(5Z,8Z,11Z,14Z-eicosatetraenoyl)-sn-glycero-3-phosphoethanolamine + N-(acetyl)-sphing-4-enine = 2-(5Z,8Z,11Z,14Z)-eicosatetraenoyl-sn-glycero-3-phosphoethanolamine + 1-hexadecanoyl-N-(acetyl)-sphing-4-enine. It carries out the reaction N-(acetyl)-sphing-4-enine + a 1,2-diacyl-sn-glycero-3-phosphoethanolamine = 1-O-acyl-N-(acetyl)-sphing-4-enine + a 1-acyl-sn-glycero-3-phosphoethanolamine. The catalysed reaction is 1-hexadecanoyl-2-(9Z-octadecenoyl)-sn-glycero-3-phosphoethanolamine + N-(acetyl)-sphing-4-enine = 1-(9Z-octadecenoyl)-N-(acetyl)-sphing-4-enine + 1-hexadecanoyl-sn-glycero-3-phosphoethanolamine. The enzyme catalyses 1-hexadecanoyl-2-(9Z,12Z-octadecadienoyl)-sn-glycero-3-phosphoethanolamine + N-(acetyl)-sphing-4-enine = 1-(9Z,12Z-octadecadienoyl)-N-acetylsphing-4-enine + 1-hexadecanoyl-sn-glycero-3-phosphoethanolamine. It catalyses the reaction 1-hexadecanoyl-2-(5Z,8Z,11Z,14Z-eicosatetraenoyl)-sn-glycero-3-phosphoethanolamine + N-(acetyl)-sphing-4-enine = 1-(5Z,8Z,11Z,14Z)-eicosatetraenoyl-N-(acetyl)-sphing-4-enine + 1-hexadecanoyl-sn-glycero-3-phosphoethanolamine. It carries out the reaction N-(acetyl)-sphing-4-enine + a 1,2-diacyl-sn-glycero-3-phosphocholine = 1-O-acyl-N-(acetyl)-sphing-4-enine + a 2-acyl-sn-glycero-3-phosphocholine. The catalysed reaction is 1-hexadecanoyl-2-(9Z-octadecenoyl)-sn-glycero-3-phosphocholine + N-(acetyl)-sphing-4-enine = 1-hexadecanoyl-N-(acetyl)-sphing-4-enine + 2-(9Z-octadecenoyl)-sn-glycero-3-phosphocholine. The enzyme catalyses 1-hexadecanoyl-2-(9Z,12Z-octadecadienoyl)-sn-glycero-3-phosphocholine + N-(acetyl)-sphing-4-enine = 2-(9Z,12Z-octadecadienoyl)-sn-glycero-3-phosphocholine + 1-hexadecanoyl-N-(acetyl)-sphing-4-enine. It catalyses the reaction 1-hexadecanoyl-2-(5Z,8Z,11Z,14Z-eicosatetraenoyl)-sn-glycero-3-phosphocholine + N-(acetyl)-sphing-4-enine = 1-hexadecanoyl-N-(acetyl)-sphing-4-enine + 2-(5Z,8Z,11Z,14Z)-eicosatetraenoyl-sn-glycero-3-phosphocholine. It carries out the reaction 1-hexadecanoyl-2-(4Z,7Z,10Z,13Z,16Z,19Z-docosahexaenoyl)-sn-glycero-3-phosphocholine + N-(acetyl)-sphing-4-enine = 2-(4Z,7Z,10Z,13Z,16Z,19Z-docosahexaenoyl)-sn-glycero-3-phosphocholine + 1-hexadecanoyl-N-(acetyl)-sphing-4-enine. The catalysed reaction is 1-hexadecanoyl-2-nonadioyl-sn-glycero-3-phosphocholine + N-(acetyl)-sphing-4-enine = 2-nonadioyl-sn-glycero-3-phosphocholine + 1-hexadecanoyl-N-(acetyl)-sphing-4-enine. The enzyme catalyses 1-octadecanoyl-2-(9Z-octadecenoyl)-sn-glycero-3-phosphocholine + N-(acetyl)-sphing-4-enine = 1-octadecanoyl-N-(acetyl)-sphing-4-enine + 2-(9Z-octadecenoyl)-sn-glycero-3-phosphocholine. It catalyses the reaction 1-(9Z)-octadecenoyl-2-octadecanoyl-sn-glycero-3-phosphocholine + N-(acetyl)-sphing-4-enine = 2-octadecanoyl-sn-glycero-3-phosphocholine + 1-(9Z-octadecenoyl)-N-(acetyl)-sphing-4-enine. It carries out the reaction 1-octadecanoyl-2-(5Z,8Z,11Z,14Z-eicosatetraenoyl)-sn-glycero-3-phosphocholine + N-(acetyl)-sphing-4-enine = 1-octadecanoyl-N-(acetyl)-sphing-4-enine + 2-(5Z,8Z,11Z,14Z)-eicosatetraenoyl-sn-glycero-3-phosphocholine. The catalysed reaction is 1-(9Z-octadecenoyl)-2-hexadecanoyl-sn-glycero-3-phosphocholine + N-(acetyl)-sphing-4-enine = 1-(9Z-octadecenoyl)-N-(acetyl)-sphing-4-enine + 2-hexadecanoyl-sn-glycero-3-phosphocholine. The enzyme catalyses N-(acetyl)-sphing-4-enine + a 1,2-diacyl-sn-glycero-3-phosphocholine = 1-O-acyl-N-(acetyl)-sphing-4-enine + a 1-acyl-sn-glycero-3-phosphocholine. It catalyses the reaction 1-hexadecanoyl-2-(9Z-octadecenoyl)-sn-glycero-3-phosphocholine + N-(acetyl)-sphing-4-enine = 1-(9Z-octadecenoyl)-N-(acetyl)-sphing-4-enine + 1-hexadecanoyl-sn-glycero-3-phosphocholine. It carries out the reaction 1-hexadecanoyl-2-(9Z,12Z-octadecadienoyl)-sn-glycero-3-phosphocholine + N-(acetyl)-sphing-4-enine = 1-(9Z,12Z-octadecadienoyl)-N-acetylsphing-4-enine + 1-hexadecanoyl-sn-glycero-3-phosphocholine. The catalysed reaction is 1-hexadecanoyl-2-(5Z,8Z,11Z,14Z-eicosatetraenoyl)-sn-glycero-3-phosphocholine + N-(acetyl)-sphing-4-enine = 1-(5Z,8Z,11Z,14Z)-eicosatetraenoyl-N-(acetyl)-sphing-4-enine + 1-hexadecanoyl-sn-glycero-3-phosphocholine. The enzyme catalyses 1-hexadecanoyl-2-(4Z,7Z,10Z,13Z,16Z,19Z-docosahexaenoyl)-sn-glycero-3-phosphocholine + N-(acetyl)-sphing-4-enine = 1-(4Z,7Z,10Z,13Z,16Z,19Z-docosahexaenoyl)-N-(acetyl)-sphing-4-enine + 1-hexadecanoyl-sn-glycero-3-phosphocholine. It catalyses the reaction 1-octadecanoyl-2-(9Z-octadecenoyl)-sn-glycero-3-phosphocholine + N-(acetyl)-sphing-4-enine = 1-(9Z-octadecenoyl)-N-(acetyl)-sphing-4-enine + 1-octadecanoyl-sn-glycero-3-phosphocholine. It carries out the reaction 1-octadecanoyl-2-(9Z,12Z)-octadecadienoyl-sn-glycero-3-phosphocholine + N-(acetyl)-sphing-4-enine = 1-(9Z,12Z-octadecadienoyl)-N-acetylsphing-4-enine + 1-octadecanoyl-sn-glycero-3-phosphocholine. The catalysed reaction is 1-(9Z-octadecenoyl)-2-hexadecanoyl-sn-glycero-3-phosphocholine + N-(acetyl)-sphing-4-enine = 1-hexadecanoyl-N-(acetyl)-sphing-4-enine + 1-(9Z-octadecenoyl)-sn-glycero-3-phosphocholine. The enzyme catalyses 1-(9Z)-octadecenoyl-2-octadecanoyl-sn-glycero-3-phosphocholine + N-(acetyl)-sphing-4-enine = 1-octadecanoyl-N-(acetyl)-sphing-4-enine + 1-(9Z-octadecenoyl)-sn-glycero-3-phosphocholine. It catalyses the reaction 1,2-di-(9Z-octadecenoyl)-sn-glycero-3-phosphocholine + N-(acetyl)-sphing-4-enine = 1-(9Z-octadecenoyl)-N-(acetyl)-sphing-4-enine + 1-(9Z-octadecenoyl)-sn-glycero-3-phosphocholine. It carries out the reaction 1-octadecanoyl-2-(5Z,8Z,11Z,14Z-eicosatetraenoyl)-sn-glycero-3-phosphocholine + N-(acetyl)-sphing-4-enine = 1-(5Z,8Z,11Z,14Z)-eicosatetraenoyl-N-(acetyl)-sphing-4-enine + 1-octadecanoyl-sn-glycero-3-phosphocholine. The catalysed reaction is a 1,2-diacyl-sn-glycero-3-phospho-L-serine + N-(acetyl)-sphing-4-enine = a 2-acyl-sn-glycero-3-phospho-L-serine + 1-O-acyl-N-(acetyl)-sphing-4-enine. The enzyme catalyses 1-octadecanoyl-2-(9Z-octadecenoyl)-sn-glycero-3-phospho-L-serine + N-(acetyl)-sphing-4-enine = 2-(9Z-octadecenoyl)-sn-glycero-3-phospho-L-serine + 1-octadecanoyl-N-(acetyl)-sphing-4-enine. It catalyses the reaction a 1,2-diacyl-sn-glycero-3-phospho-L-serine + N-(acetyl)-sphing-4-enine = 1-O-acyl-N-(acetyl)-sphing-4-enine + a 1-acyl-sn-glycero-3-phospho-L-serine. It carries out the reaction 1-octadecanoyl-2-(9Z-octadecenoyl)-sn-glycero-3-phospho-L-serine + N-(acetyl)-sphing-4-enine = 1-octadecanoyl-sn-glycero-3-phosphoserine + 1-(9Z-octadecenoyl)-N-(acetyl)-sphing-4-enine. The catalysed reaction is a 1,2-diacyl-sn-glycero-3-phospho-(1'-sn-glycerol) + N-(acetyl)-sphing-4-enine = 2-acyl-sn-glycero-3-phospho-(1'-sn-glycerol) + 1-O-acyl-N-(acetyl)-sphing-4-enine. The enzyme catalyses 1-octadecanoyl-2-(9Z-octadecenoyl)-sn-glycero-3-phospho-(1'-sn-glycerol) + N-(acetyl)-sphing-4-enine = 2-(9Z-octadecenoyl)-sn-glycero-3-phospho-(1'-sn-glycerol) + 1-octadecanoyl-N-(acetyl)-sphing-4-enine. It catalyses the reaction a 1,2-diacyl-sn-glycero-3-phospho-(1'-sn-glycerol) + N-(acetyl)-sphing-4-enine = 1-O-acyl-N-(acetyl)-sphing-4-enine + 1-acyl-sn-glycero-3-phospho-(1'-sn-glycerol). It carries out the reaction 1-octadecanoyl-2-(9Z-octadecenoyl)-sn-glycero-3-phospho-(1'-sn-glycerol) + N-(acetyl)-sphing-4-enine = 1-octadecanoyl-sn-glycero-3-phospho-(1'-sn-glycerol) + 1-(9Z-octadecenoyl)-N-(acetyl)-sphing-4-enine. The catalysed reaction is an N-acylethanolamine + a 1,2-diacyl-sn-glycero-3-phosphocholine = 2-(acylamino)ethyl fatty acid + a 2-acyl-sn-glycero-3-phosphocholine. The enzyme catalyses an N-acylethanolamine + a 1,2-diacyl-sn-glycero-3-phosphocholine = 2-(acylamino)ethyl fatty acid + a 1-acyl-sn-glycero-3-phosphocholine. It catalyses the reaction N-(5Z,8Z,11Z,14Z-eicosatetraenoyl)-ethanolamine + 1,2-di-(9Z-octadecenoyl)-sn-glycero-3-phosphocholine = 2-[(5Z,8Z,11Z,14Z)-eicosatetraenoylamino]ethyl (9Z)-octadecenoate + (9Z-octadecenoyl)-sn-glycero-3-phosphocholine. It carries out the reaction N-(9Z-octadecenoyl) ethanolamine + 1,2-di-(9Z-octadecenoyl)-sn-glycero-3-phosphocholine = 2-[(9Z)-octadecenoylamino]ethyl (9Z)-octadecenoate + (9Z-octadecenoyl)-sn-glycero-3-phosphocholine. The catalysed reaction is a 3-acyl-sn-glycerol + a 1,2-diacyl-sn-glycero-3-phosphocholine = a 1,3-diacylglycerol + a 1-acyl-sn-glycero-3-phosphocholine. The enzyme catalyses a 3-acyl-sn-glycerol + a 1,2-diacyl-sn-glycero-3-phosphocholine = a 1,3-diacylglycerol + a 2-acyl-sn-glycero-3-phosphocholine. It catalyses the reaction 3-(9Z-octadecenoyl)-sn-glycerol + 1,2-di-(9Z-octadecenoyl)-sn-glycero-3-phosphocholine = 1,3-di-(9Z-octadecenoyl)-glycerol + (9Z-octadecenoyl)-sn-glycero-3-phosphocholine. It carries out the reaction 3-hexadecanoyl-sn-glycerol + 1,2-di-(9Z-octadecenoyl)-sn-glycero-3-phosphocholine = 1-(9Z)-octadecenoyl-3-hexadecanoyl-sn-glycerol + (9Z-octadecenoyl)-sn-glycero-3-phosphocholine. The catalysed reaction is a 1-acyl-sn-glycerol + a 1,2-diacyl-sn-glycero-3-phosphocholine = a 1,3-diacylglycerol + a 2-acyl-sn-glycero-3-phosphocholine. The enzyme catalyses a 1-acyl-sn-glycerol + a 1,2-diacyl-sn-glycero-3-phosphocholine = a 1,3-diacylglycerol + a 1-acyl-sn-glycero-3-phosphocholine. It catalyses the reaction 1-(9Z-octadecenoyl)-sn-glycerol + 1,2-di-(9Z-octadecenoyl)-sn-glycero-3-phosphocholine = 1,3-di-(9Z-octadecenoyl)-glycerol + (9Z-octadecenoyl)-sn-glycero-3-phosphocholine. It carries out the reaction 1-hexadecanoyl-sn-glycerol + 1,2-di-(9Z-octadecenoyl)-sn-glycero-3-phosphocholine = 1-hexadecanoyl-3-(9Z)-octadecenoyl-sn-glycerol + (9Z-octadecenoyl)-sn-glycero-3-phosphocholine. The catalysed reaction is a 2-acylglycerol + a 1,2-diacyl-sn-glycero-3-phosphocholine = a 1,2-diacylglycerol + a 2-acyl-sn-glycero-3-phosphocholine. The enzyme catalyses a 2-acylglycerol + a 1,2-diacyl-sn-glycero-3-phosphocholine = a 1,2-diacylglycerol + a 1-acyl-sn-glycero-3-phosphocholine. It catalyses the reaction 2-hexadecanoylglycerol + 1,2-di-(9Z-octadecenoyl)-sn-glycero-3-phosphocholine = 1-(9Z)-octadecenoyl-2-hexadecanoylglycerol + (9Z-octadecenoyl)-sn-glycero-3-phosphocholine. It carries out the reaction 1-O-alkylglycerol + a 1,2-diacyl-sn-glycero-3-phosphocholine = 1-O-alkyl-3-acylglycerol + a 1-acyl-sn-glycero-3-phosphocholine. The catalysed reaction is 1-O-alkylglycerol + a 1,2-diacyl-sn-glycero-3-phosphocholine = 1-O-alkyl-3-acylglycerol + a 2-acyl-sn-glycero-3-phosphocholine. The enzyme catalyses 1-O-hexadecylglycerol + 1,2-di-(9Z-octadecenoyl)-sn-glycero-3-phosphocholine = 1-O-hexadecyl-3-(9Z)-octadecenoylglycerol + (9Z-octadecenoyl)-sn-glycero-3-phosphocholine. It catalyses the reaction 1-O-alkyl-2-acyl-sn-glycerol + a 1,2-diacyl-sn-glycero-3-phosphocholine = 1-O-alkyl-2,3-diacyl-sn-glycerol + a 2-acyl-sn-glycero-3-phosphocholine. It carries out the reaction 1-O-alkyl-2-acyl-sn-glycerol + a 1,2-diacyl-sn-glycero-3-phosphocholine = 1-O-alkyl-2,3-diacyl-sn-glycerol + a 1-acyl-sn-glycero-3-phosphocholine. The catalysed reaction is 1-O-hexadecyl-2-acetyl-sn-glycerol + 1,2-di-(9Z-octadecenoyl)-sn-glycero-3-phosphocholine = 1-O-hexadecyl-2-acetyl-3-(9Z)-octadecenoyl-sn-glycerol + (9Z-octadecenoyl)-sn-glycero-3-phosphocholine. The enzyme catalyses 1-O-hexadecyl-2-O-methyl-sn-glycerol + 1,2-di-(9Z-octadecenoyl)-sn-glycero-3-phosphocholine = 1-O-hexadecyl-2-O-methyl-3-(9Z)-octadecenoyl-sn-glycerol + (9Z-octadecenoyl)-sn-glycero-3-phosphocholine. It catalyses the reaction a 1,2-diacyl-sn-glycero-3-phosphoethanolamine + H2O = a 1-acyl-sn-glycero-3-phosphoethanolamine + a fatty acid + H(+). It carries out the reaction 1-acyl-2-(5Z,8Z,11Z,14Z)-eicosatetraenoyl-sn-glycero-3-phosphoethanolamine + H2O = a 1-acyl-sn-glycero-3-phosphoethanolamine + (5Z,8Z,11Z,14Z)-eicosatetraenoate + H(+). The catalysed reaction is a 1,2-diacyl-sn-glycero-3-phospho-(1'-sn-glycerol) + H2O = 1-acyl-sn-glycero-3-phospho-(1'-sn-glycerol) + a fatty acid + H(+). The enzyme catalyses 1-hexadecanoyl-2-(9Z-octadecenoyl)-sn-glycero-3-phospho-(1'-sn-glycerol) + H2O = 1-hexadecanoyl-sn-glycero-3-phospho-(1'-sn-glycerol) + (9Z)-octadecenoate + H(+). It catalyses the reaction a 1,2-diacyl-sn-glycero-3-phospho-(1'-sn-glycerol) + H2O = 2-acyl-sn-glycero-3-phospho-(1'-sn-glycerol) + a fatty acid + H(+). It carries out the reaction 1-hexadecanoyl-2-(9Z-octadecenoyl)-sn-glycero-3-phospho-(1'-sn-glycerol) + H2O = 2-(9Z-octadecenoyl)-sn-glycero-3-phospho-(1'-sn-glycerol) + hexadecanoate + H(+). Its activity is regulated as follows. Phospholipase sn-2 versus sn-1 positional specificity is affected by the phospholipid composition of membranes. Phospholipase A2 activity toward 1-hexadecanoyl-2-(5Z,8Z,11Z,14Z-eicosatetraenoyl)-sn-glycero-3-phosphocholine (PAPE) is enhanced in the presence of 1,2-dioleoyl-sn-glycero-3-phosphocholine (DOPC), which promotes lipid bilayer formation. O-acyltransferase activity is inhibited by antiarrhythmic drug amiodarone. Functionally, has dual calcium-independent phospholipase and O-acyltransferase activities with a potential role in glycerophospholipid homeostasis and remodeling of acyl groups of lipophilic alcohols present in acidic cellular compartments. Catalyzes hydrolysis of the ester bond of the fatty acyl group attached at sn-1 or sn-2 position of phospholipids (phospholipase A1 or A2 activity) and transfer it to the hydroxyl group at the first carbon of lipophilic alcohols (O-acyltransferase activity). Among preferred fatty acyl donors are phosphatidylcholines, phosphatidylethanolamines, phosphatidylglycerols and phosphatidylserines. Favors sn-2 over sn-1 deacylation of unsaturated fatty acyl groups of phosphatidylcholines, phosphatidylethanolamines, and phosphatidylglycerols. Among preferred fatty acyl acceptors are natural lipophilic alcohols including short-chain ceramide N-acetyl-sphingosine (C2 ceramide), alkylacylglycerols, monoacylglycerols, and acylethanolamides such as anandamide and oleoylethanolamide. Selectively hydrolyzes the sn-1 fatty acyl group of truncated oxidized phospholipids and may play a role in detoxification of reactive oxidized phospholipids during oxidative stress. Required for normal phospholipid degradation in alveolar macrophages with potential implications in the clearance of pulmonary surfactant, which is mainly composed of dipalmitoylphosphatidylcholine (1,2-dihexadecanoyl-sn-glycero-3-phosphocholine). Involved in the first step of bis(monoacylglycero)phosphate (BMP) de novo synthesis from phosphatidylglycerol (1,2-diacyl-sn-glycero-3-phospho-(1'-sn-glycerol), PG). BMP is an important player in cargo sorting and degradation, regulation of cellular cholesterol levels and intercellular communication. At neutral pH, hydrolyzes the sn-1 fatty acyl group of the lysophosphatidylcholines. The chain is Lysosomal phospholipase A and acyltransferase from Mus musculus (Mouse).